Consider the following 98-residue polypeptide: Protein Frey 1 (98 aa).

Residues Ala13–Arg29 traverse the membrane as a helical segment. The disordered stretch occupies residues Tyr60–Pro87.

Interacts with SPPL2C (via active sites); the interaction stabilizes FREY1 protein and inhibits SPPL2C proteolytic activity. Interacts with IZUMO1; the interaction retains IZUMO1 at the endoplasmic reticulum membrane and coordinates IZUMO1 complex assembly.

Its subcellular location is the endoplasmic reticulum membrane. Key regulator for male fertility expressed transiently in round spermatids where it recruits IZUMO1 at the endoplasmic reticulum (ER) membrane and coordinates the oolemmal binding multimeric complex (IZUMO1 complex) assembly. Upon complete assembly of the IZUMO1 complex, its ER retention is released, facilitating IZUMO1 complex export to the acrosome. Through the interaction with SPPL2C, inhibits its intramembrane protease activity directly accessing the catalytic center of an I-CLiP. The polypeptide is Protein Frey 1 (Homo sapiens (Human)).